A 331-amino-acid chain; its full sequence is Ketol-acid reductoisomerase (NADP(+)) (331 aa).

The 180-residue stretch at 2-181 (IKKYYESDAD…GATRAVVFET (180 aa)) folds into the KARI N-terminal Rossmann domain. NADP(+)-binding positions include 25 to 28 (YGSQ), Arg-48, Ser-52, and 82 to 85 (DESQ). Residue His-107 is part of the active site. Gly-133 is an NADP(+) binding site. The region spanning 182–327 (TFREETETDL…AEIRGLMPQF (146 aa)) is the KARI C-terminal knotted domain. Asp-190, Glu-194, Glu-226, and Glu-230 together coordinate Mg(2+). Residue Ser-251 participates in substrate binding.

The protein belongs to the ketol-acid reductoisomerase family. It depends on Mg(2+) as a cofactor.

The catalysed reaction is (2R)-2,3-dihydroxy-3-methylbutanoate + NADP(+) = (2S)-2-acetolactate + NADPH + H(+). It carries out the reaction (2R,3R)-2,3-dihydroxy-3-methylpentanoate + NADP(+) = (S)-2-ethyl-2-hydroxy-3-oxobutanoate + NADPH + H(+). Its pathway is amino-acid biosynthesis; L-isoleucine biosynthesis; L-isoleucine from 2-oxobutanoate: step 2/4. It participates in amino-acid biosynthesis; L-valine biosynthesis; L-valine from pyruvate: step 2/4. Involved in the biosynthesis of branched-chain amino acids (BCAA). Catalyzes an alkyl-migration followed by a ketol-acid reduction of (S)-2-acetolactate (S2AL) to yield (R)-2,3-dihydroxy-isovalerate. In the isomerase reaction, S2AL is rearranged via a Mg-dependent methyl migration to produce 3-hydroxy-3-methyl-2-ketobutyrate (HMKB). In the reductase reaction, this 2-ketoacid undergoes a metal-dependent reduction by NADPH to yield (R)-2,3-dihydroxy-isovalerate. This chain is Ketol-acid reductoisomerase (NADP(+)), found in Methanosphaerula palustris (strain ATCC BAA-1556 / DSM 19958 / E1-9c).